A 368-amino-acid chain; its full sequence is MGLIKLKVNTNSQQYSIIIGNNILKKVNKFLKENSIDFNQCLLVIDKNIPKNLVKDTLKSLPKGSVSIHYFNASEKNKNLKSVNEITSILLKKSFNRNDCLISIGGGITGDVSGFAASTFKRGLKFVNIPTTLLSQVDSSIGGKTGVNTKYGKNLIGSFYQPSLVISDTNFLNSLPKREVVCGYGEILKHSLINGKKFFYFLNKNGKKIIQLKSPFIQTAIHQSCLIKKKVVEADEKELGIRKILNFGHTFAHAFEATLRYSAKLNHGEAVILGVKTAARFSLLNKILNKKEFELIDGHLNDLNLPRDINKFFSIKNLNTIISFMRKDKKNNTKKISLVLLKRIGSPVYKLQFNEKTINLFLKKELTK.

Residues 131 to 132 (TT), K144, and K153 each bind NAD(+). E186, H249, and H267 together coordinate Zn(2+).

This sequence belongs to the sugar phosphate cyclases superfamily. Dehydroquinate synthase family. Co(2+) serves as cofactor. Requires Zn(2+) as cofactor. The cofactor is NAD(+).

The protein localises to the cytoplasm. It carries out the reaction 7-phospho-2-dehydro-3-deoxy-D-arabino-heptonate = 3-dehydroquinate + phosphate. The protein operates within metabolic intermediate biosynthesis; chorismate biosynthesis; chorismate from D-erythrose 4-phosphate and phosphoenolpyruvate: step 2/7. Catalyzes the conversion of 3-deoxy-D-arabino-heptulosonate 7-phosphate (DAHP) to dehydroquinate (DHQ). The chain is 3-dehydroquinate synthase from Pelagibacter ubique (strain HTCC1062).